The chain runs to 219 residues: MKSLFVAGTGTDLGKTHVACALLEAARAGGLSVDAFKPVVSGFDPDAPDDSDPARLARALGRPEAWTDVSPRRYRAPLAPNIAARLEGDTLQMDDLITDCREWLIGRDVGLALIEGAGGVMSPMTDEATNLDLMVALGLPVLLVAGSYLGTASHLLTALEVLRARGLSIAAIVVSESLDAPDLDQTLGLLRAFEHQATILSAPRAGNWDAGSLVDLLMA.

ATP is bound at residue 12 to 17 (DLGKTH). Residue Thr16 participates in Mg(2+) binding. Lys37 is an active-site residue. Residue Ser41 participates in substrate binding. Residues Asp52, 115 to 118 (EGAG), and 175 to 176 (SE) contribute to the ATP site. Mg(2+)-binding residues include Asp52 and Glu115.

The protein belongs to the dethiobiotin synthetase family. Homodimer. Mg(2+) is required as a cofactor.

It localises to the cytoplasm. It catalyses the reaction (7R,8S)-7,8-diammoniononanoate + CO2 + ATP = (4R,5S)-dethiobiotin + ADP + phosphate + 3 H(+). The protein operates within cofactor biosynthesis; biotin biosynthesis; biotin from 7,8-diaminononanoate: step 1/2. Its function is as follows. Catalyzes a mechanistically unusual reaction, the ATP-dependent insertion of CO2 between the N7 and N8 nitrogen atoms of 7,8-diaminopelargonic acid (DAPA, also called 7,8-diammoniononanoate) to form a ureido ring. The polypeptide is ATP-dependent dethiobiotin synthetase BioD (Caulobacter vibrioides (strain ATCC 19089 / CIP 103742 / CB 15) (Caulobacter crescentus)).